Here is a 91-residue protein sequence, read N- to C-terminus: Conotoxin VnMKLT1-021 (91 aa).

An N-terminal signal peptide occupies residues Met-1 to Ala-22. A propeptide spanning residues Asp-23–Arg-57 is cleaved from the precursor. Cystine bridges form between Cys-59/Cys-78, Cys-66/Cys-82, and Cys-77/Cys-86.

Belongs to the conotoxin O1 superfamily. Expressed by the venom duct.

It localises to the secreted. In Conus ventricosus (Mediterranean cone), this protein is Conotoxin VnMKLT1-021.